The primary structure comprises 142 residues: uncharacterized protein (142 aa).

The segment at 19–54 is disordered; that stretch reads IHTTPHPHTPHHTHHTHTTPTPTPHPHTHTPTPERS. Positions 26–35 are enriched in basic residues; sequence HTPHHTHHTH.

This is an uncharacterized protein from Saccharomyces cerevisiae (strain ATCC 204508 / S288c) (Baker's yeast).